Consider the following 255-residue polypeptide: Indole-3-glycerol phosphate synthase (255 aa).

The protein belongs to the TrpC family.

It carries out the reaction 1-(2-carboxyphenylamino)-1-deoxy-D-ribulose 5-phosphate + H(+) = (1S,2R)-1-C-(indol-3-yl)glycerol 3-phosphate + CO2 + H2O. Its pathway is amino-acid biosynthesis; L-tryptophan biosynthesis; L-tryptophan from chorismate: step 4/5. The chain is Indole-3-glycerol phosphate synthase from Shouchella clausii (strain KSM-K16) (Alkalihalobacillus clausii).